A 514-amino-acid chain; its full sequence is ATP synthase subunit alpha (514 aa).

170–177 (GDRQIGKT) contributes to the ATP binding site.

It belongs to the ATPase alpha/beta chains family. In terms of assembly, F-type ATPases have 2 components, CF(1) - the catalytic core - and CF(0) - the membrane proton channel. CF(1) has five subunits: alpha(3), beta(3), gamma(1), delta(1), epsilon(1). CF(0) has three main subunits: a(1), b(2) and c(9-12). The alpha and beta chains form an alternating ring which encloses part of the gamma chain. CF(1) is attached to CF(0) by a central stalk formed by the gamma and epsilon chains, while a peripheral stalk is formed by the delta and b chains.

Its subcellular location is the cell inner membrane. It carries out the reaction ATP + H2O + 4 H(+)(in) = ADP + phosphate + 5 H(+)(out). Its function is as follows. Produces ATP from ADP in the presence of a proton gradient across the membrane. The alpha chain is a regulatory subunit. The protein is ATP synthase subunit alpha of Pseudomonas fluorescens (strain SBW25).